A 216-amino-acid chain; its full sequence is Transmembrane protein 186 (216 aa).

The Mitochondrial matrix portion of the chain corresponds to 1–68 (MAFLLRAVPR…IYRFNAIRAL (68 aa)). Residues 69 to 91 (GFLSRLKLAQTAVTVVALPPGFY) traverse the membrane as a helical segment. Residues 92–103 (CYSQGLMTLSSL) lie on the Mitochondrial intermembrane side of the membrane. Residues 104-124 (GLMSGIASFALVMLCWMSHFF) traverse the membrane as a helical segment. Residues 125-216 (RRLVGILYVN…GTLATLKNSK (92 aa)) lie on the Mitochondrial matrix side of the membrane.

The protein belongs to the TMEM186 family. Part of the mitochondrial complex I assembly/MCIA complex that comprises at least the core subunits TMEM126B, NDUFAF1, ECSIT and ACAD9 and complement subunits such as COA1 and TMEM186. Interacts with MT-ND3.

The protein localises to the mitochondrion inner membrane. As part of the MCIA complex, required for efficient assembly of the mitochondrial complex I. The protein is Transmembrane protein 186 of Rattus norvegicus (Rat).